The primary structure comprises 655 residues: RalA-binding protein 1 (655 aa).

The interval 1–158 (MTECFLPPTS…KKSKDLTAAD (158 aa)) is disordered. An N-acetylthreonine modification is found at T2. The segment covering 24–33 (LTRTPSSEEI) has biased composition (polar residues). Phosphoserine occurs at positions 29, 30, and 34. T44 carries the phosphothreonine modification. S48 and S62 each carry phosphoserine. Basic and acidic residues predominate over residues 52-68 (DILHEPPDVVSDDEKDH). 69–74 (GKKKGK) is a binding site for ATP. The segment covering 69-79 (GKKKGKFKKKE) has biased composition (basic residues). S92 and S93 each carry phosphoserine. Residues 102–118 (KMKRSKGIHVFKKPSFS) are compositionally biased toward basic residues. Residues 102-119 (KMKRSKGIHVFKKPSFSK) form a nuclear localization signal region. Positions 119-155 (KKKEKDFKIKEKPKEEKHKEEKHKEEKHKEKKSKDLT) are enriched in basic and acidic residues. The tract at residues 154–219 (LTAADVVKQW…PAVFRECIDY (66 aa)) is mediates association with membranes and could form transmembrane domains. One can recognise a Rho-GAP domain in the interval 192 to 380 (IPLADAVERT…VVLKQVMKPL (189 aa)). The tract at residues 403–499 (RRQEFLLNCL…LTEQEELLAM (97 aa)) is mediates interaction with RALA and RALB. 418–425 (GGIKDLSK) provides a ligand contact to ATP. S461 and S463 each carry phosphoserine. The tract at residues 500-655 (EQFLRRQIAS…PSRDRKETSI (156 aa)) is mediates interaction with REPS1 and REPS2. 2 disordered regions span residues 525-551 (QSRQQHGRSETEEYSSESESESEDEEE) and 601-655 (AEQQ…ETSI). The span at 536-551 (EEYSSESESESEDEEE) shows a compositional bias: acidic residues. The span at 624–655 (GVLEPKAAKEQPKAGKEPAKPSPSRDRKETSI) shows a compositional bias: basic and acidic residues. At S645 the chain carries Phosphoserine.

As to quaternary structure, interacts with the GTP-bound form of RALA (via effector domain); during mitosis, recruits RALBP1 to the mitochondrion where it promotes DNM1L phosphorylation and mitochondrial fission. Interacts with DNM1L; mediates its mitotic kinase cyclin B-CDK1-mediated phosphorylation during mitosis to promote mitochondrial fission. Interacts with the mitotic kinase cyclin B-CDK1 during mitosis. Interacts with the GTP-bound form of RALB (via effector domain). Interacts with REPS1; the interaction is direct and does not affect RALA-binding nor GTPase activator activity of RALBP1. Interacts with REPS2; the interaction is direct and does not affect RALA-binding nor GTPase activator activity of RALBP1. Interacts with EPN1, NUMB and TFAP2A during interphase and mitosis. Interacts with AP2M1; as part of the AP2 complex. Interacts with CDC42. Interacts with RAC1. In terms of processing, tyrosine-phosphorylated upon stimulation of cells with EGF. Post-translationally, may undergo proteolytic cleavage to give peptides which reassemble to form a transporter complex. As to expression, expressed ubiquitously but at low levels. Shows a strong expression in the erythrocytes.

The protein localises to the cell membrane. The protein resides in the cytoplasm. It is found in the cytosol. Its subcellular location is the cytoskeleton. It localises to the spindle pole. The protein localises to the nucleus. The protein resides in the mitochondrion. It catalyses the reaction an S-substituted glutathione(in) + ATP + H2O = an S-substituted glutathione(out) + ADP + phosphate + H(+). It carries out the reaction ATP + H2O + xenobioticSide 1 = ADP + phosphate + xenobioticSide 2.. The catalysed reaction is leukotriene C4(in) + ATP + H2O = leukotriene C4(out) + ADP + phosphate + H(+). Multifunctional protein that functions as a downstream effector of RALA and RALB. As a GTPase-activating protein/GAP can inactivate CDC42 and RAC1 by stimulating their GTPase activity. As part of the Ral signaling pathway, may also regulate ligand-dependent EGF and insulin receptors-mediated endocytosis. During mitosis, may act as a scaffold protein in the phosphorylation of EPSIN/EPN1 by the mitotic kinase cyclin B-CDK1, preventing endocytosis during that phase of the cell cycle. During mitosis, also controls mitochondrial fission as an effector of RALA. Recruited to mitochondrion by RALA, acts as a scaffold to foster the mitotic kinase cyclin B-CDK1-mediated phosphorylation and activation of DNM1L. Functionally, could also function as a primary ATP-dependent active transporter for glutathione conjugates of electrophiles. May also actively catalyze the efflux of a wide range of substrates including xenobiotics like doxorubicin (DOX) contributing to cell multidrug resistance. This is RalA-binding protein 1 from Homo sapiens (Human).